Here is a 139-residue protein sequence, read N- to C-terminus: Classical arabinogalactan protein 3 (139 aa).

An N-terminal signal peptide occupies residues 1-21; that stretch reads MALKTLQALIFLGLFAASCLA. A Pyrrolidone carboxylic acid modification is found at Gln22. A disordered region spans residues 30-115; the sequence is TFLPPVESPS…PAPRADGPVA (86 aa). 2 stretches are compositionally biased toward pro residues: residues 46–77 and 97–107; these read AEPP…PPTT and PSGPTPAPAPA. The GPI-anchor amidated aspartate moiety is linked to residue Asp116. Positions 117–139 are cleaved as a propeptide — removed in mature form; that stretch reads SALTNKAFLVSTVIAGALYAVLA.

The protein belongs to the classical AGP family. Post-translationally, O-glycosylated on the hydroxyproline residues. Expressed at a low level in roots.

The protein localises to the cell membrane. Functionally, proteoglycan that seems to be implicated in diverse developmental roles such as differentiation, cell-cell recognition, embryogenesis and programmed cell death. The sequence is that of Classical arabinogalactan protein 3 (AGP3) from Arabidopsis thaliana (Mouse-ear cress).